A 177-amino-acid chain; its full sequence is Large ribosomal subunit protein uL6 (177 aa).

Belongs to the universal ribosomal protein uL6 family. As to quaternary structure, part of the 50S ribosomal subunit.

Functionally, this protein binds to the 23S rRNA, and is important in its secondary structure. It is located near the subunit interface in the base of the L7/L12 stalk, and near the tRNA binding site of the peptidyltransferase center. The polypeptide is Large ribosomal subunit protein uL6 (Parvibaculum lavamentivorans (strain DS-1 / DSM 13023 / NCIMB 13966)).